The primary structure comprises 337 residues: Ketol-acid reductoisomerase (NADP(+)) (337 aa).

One can recognise a KARI N-terminal Rossmann domain in the interval 3-183 (VEVFYDDDAD…GGTRAGAIRT (181 aa)). Residues 26 to 29 (YGSQ), serine 52, serine 54, and 84 to 87 (DTAQ) contribute to the NADP(+) site. Histidine 109 is an active-site residue. Glycine 135 is an NADP(+) binding site. One can recognise a KARI C-terminal knotted domain in the interval 184 to 329 (TFTEETETDL…SKLRGMMSWV (146 aa)). Residues aspartate 192, glutamate 196, glutamate 228, and glutamate 232 each coordinate Mg(2+). Serine 253 is a binding site for substrate.

The protein belongs to the ketol-acid reductoisomerase family. Mg(2+) is required as a cofactor.

The catalysed reaction is (2R)-2,3-dihydroxy-3-methylbutanoate + NADP(+) = (2S)-2-acetolactate + NADPH + H(+). The enzyme catalyses (2R,3R)-2,3-dihydroxy-3-methylpentanoate + NADP(+) = (S)-2-ethyl-2-hydroxy-3-oxobutanoate + NADPH + H(+). It functions in the pathway amino-acid biosynthesis; L-isoleucine biosynthesis; L-isoleucine from 2-oxobutanoate: step 2/4. Its pathway is amino-acid biosynthesis; L-valine biosynthesis; L-valine from pyruvate: step 2/4. Functionally, involved in the biosynthesis of branched-chain amino acids (BCAA). Catalyzes an alkyl-migration followed by a ketol-acid reduction of (S)-2-acetolactate (S2AL) to yield (R)-2,3-dihydroxy-isovalerate. In the isomerase reaction, S2AL is rearranged via a Mg-dependent methyl migration to produce 3-hydroxy-3-methyl-2-ketobutyrate (HMKB). In the reductase reaction, this 2-ketoacid undergoes a metal-dependent reduction by NADPH to yield (R)-2,3-dihydroxy-isovalerate. In Salinispora arenicola (strain CNS-205), this protein is Ketol-acid reductoisomerase (NADP(+)).